A 104-amino-acid polypeptide reads, in one-letter code: Pyrimidine/purine nucleoside phosphorylase (104 aa).

The protein belongs to the nucleoside phosphorylase PpnP family.

It carries out the reaction a purine D-ribonucleoside + phosphate = a purine nucleobase + alpha-D-ribose 1-phosphate. The catalysed reaction is adenosine + phosphate = alpha-D-ribose 1-phosphate + adenine. The enzyme catalyses cytidine + phosphate = cytosine + alpha-D-ribose 1-phosphate. It catalyses the reaction guanosine + phosphate = alpha-D-ribose 1-phosphate + guanine. It carries out the reaction inosine + phosphate = alpha-D-ribose 1-phosphate + hypoxanthine. The catalysed reaction is thymidine + phosphate = 2-deoxy-alpha-D-ribose 1-phosphate + thymine. The enzyme catalyses uridine + phosphate = alpha-D-ribose 1-phosphate + uracil. It catalyses the reaction xanthosine + phosphate = alpha-D-ribose 1-phosphate + xanthine. Its function is as follows. Catalyzes the phosphorolysis of diverse nucleosides, yielding D-ribose 1-phosphate and the respective free bases. Can use uridine, adenosine, guanosine, cytidine, thymidine, inosine and xanthosine as substrates. Also catalyzes the reverse reactions. This chain is Pyrimidine/purine nucleoside phosphorylase, found in Herminiimonas arsenicoxydans.